The chain runs to 89 residues: Small ribosomal subunit protein uS15 (89 aa).

Belongs to the universal ribosomal protein uS15 family. As to quaternary structure, part of the 30S ribosomal subunit. Forms a bridge to the 50S subunit in the 70S ribosome, contacting the 23S rRNA.

Its function is as follows. One of the primary rRNA binding proteins, it binds directly to 16S rRNA where it helps nucleate assembly of the platform of the 30S subunit by binding and bridging several RNA helices of the 16S rRNA. In terms of biological role, forms an intersubunit bridge (bridge B4) with the 23S rRNA of the 50S subunit in the ribosome. The polypeptide is Small ribosomal subunit protein uS15 (Listeria innocua serovar 6a (strain ATCC BAA-680 / CLIP 11262)).